An 859-amino-acid chain; its full sequence is Toll-like receptor 5 (859 aa).

A signal peptide spans 1–26 (MACQLDLLIGVIFMASPVLVISPCSS). The Extracellular portion of the chain corresponds to 27-641 (DGRIAFFRGC…EEEAMRSLKF (615 aa)). 3 N-linked (GlcNAc...) asparagine glycosylation sites follow: N37, N46, and N84. LRR repeat units follow at residues 45–69 (LNTT…SFPL), 72–94 (RLQL…AFRN), 96–118 (PNLR…AFQG), 121–144 (HLLE…YFRN), 147–167 (SLAR…HSSF), 172–193 (SLSD…ELEP), 198–212 (TLSF…LFSR), 215–230 (VGWE…VRLE), and 235–236 (SE). N246 is a glycosylation site (N-linked (GlcNAc...) asparagine). LRR repeat units follow at residues 261-285 (LKHH…TFAS), 290-302 (SVLQ…GFIF), 314-335 (DLKM…AFYG), 338-356 (SLQV…YNSN), 386-402 (TLQT…AIGF), and 413-432 (GNKL…LELS). N343 carries N-linked (GlcNAc...) asparagine glycosylation. N-linked (GlcNAc...) asparagine glycosylation is present at N438. LRR repeat units lie at residues 450–471 (QLQF…HTPS), 475–496 (SLEQ…GLCW), 504–525 (RLQI…IFND), 528–547 (ALRM…PGSL), and 550–568 (NLEI…DPAL). An LRRCT domain is found at 580–632 (NEFVCNCELSTFISWLNQTNVTLFGSPADVYCMYPNSLLGGSLYNISTEDCDE). Intrachain disulfides connect C584-C611 and C586-C630. N-linked (GlcNAc...) asparagine glycans are attached at residues N596, N599, and N624. Residues 642-662 (SLFILCTVTLTLFLVITLVVI) form a helical membrane-spanning segment. At 663 to 859 (KFRGICFLCY…IQLRTIATIS (197 aa)) the chain is on the cytoplasmic side. The TIR domain occupies 692–837 (YRYDAYFCFS…WFLDKLSGCI (146 aa)). Residue Y799 is modified to Phosphotyrosine.

Belongs to the Toll-like receptor family. As to quaternary structure, homodimer. Interacts with MYD88 (via TIR domain). Interacts with TICAM1 (via TIR domain). Interacts with UNC93B1; this interaction is essential for proper TLR5 localization to the plasma membrane. In terms of processing, phosphorylated at Tyr-799 upon flagellin binding; required for signaling. As to expression, highly expressed in liver. Detected in lung and at very low levels in most other tissues.

The protein resides in the membrane. In terms of biological role, pattern recognition receptor (PRR) located on the cell surface that participates in the activation of innate immunity and inflammatory response. Recognizes small molecular motifs named pathogen-associated molecular pattern (PAMPs) expressed by pathogens and microbe-associated molecular patterns (MAMPs) usually expressed by resident microbiota. Upon ligand binding such as bacterial flagellins, recruits intracellular adapter proteins MYD88 and TRIF leading to NF-kappa-B activation, cytokine secretion and induction of the inflammatory response. Plays thereby an important role in the relationship between the intestinal epithelium and enteric microbes and contributes to the gut microbiota composition throughout life. This is Toll-like receptor 5 (Tlr5) from Mus musculus (Mouse).